Reading from the N-terminus, the 310-residue chain is Acetyl-coenzyme A carboxylase carboxyl transferase subunit beta (310 aa).

The 270-residue stretch at 27–296 (LWKKCPKCSA…PEFENEEELE (270 aa)) folds into the CoA carboxyltransferase N-terminal domain. Residues C31, C34, C50, and C53 each coordinate Zn(2+). A C4-type zinc finger spans residues 31-53 (CPKCSAVLYRPELEKNLDVCPKC). Positions 285–310 (PEPEFENEEELEEEEMERPEPPDNVE) are disordered. Residues 287–310 (PEFENEEELEEEEMERPEPPDNVE) are compositionally biased toward acidic residues.

Belongs to the AccD/PCCB family. In terms of assembly, acetyl-CoA carboxylase is a heterohexamer composed of biotin carboxyl carrier protein (AccB), biotin carboxylase (AccC) and two subunits each of ACCase subunit alpha (AccA) and ACCase subunit beta (AccD). Requires Zn(2+) as cofactor.

It localises to the cytoplasm. It carries out the reaction N(6)-carboxybiotinyl-L-lysyl-[protein] + acetyl-CoA = N(6)-biotinyl-L-lysyl-[protein] + malonyl-CoA. It functions in the pathway lipid metabolism; malonyl-CoA biosynthesis; malonyl-CoA from acetyl-CoA: step 1/1. Its function is as follows. Component of the acetyl coenzyme A carboxylase (ACC) complex. Biotin carboxylase (BC) catalyzes the carboxylation of biotin on its carrier protein (BCCP) and then the CO(2) group is transferred by the transcarboxylase to acetyl-CoA to form malonyl-CoA. The chain is Acetyl-coenzyme A carboxylase carboxyl transferase subunit beta from Hahella chejuensis (strain KCTC 2396).